The chain runs to 448 residues: Bifunctional protein GlmU (448 aa).

Positions 1-232 are pyrophosphorylase; it reads MSERSLLVVV…VDEVAGVNSR (232 aa). UDP-N-acetyl-alpha-D-glucosamine-binding positions include 11–14, K25, Q78, and 83–84; these read LAAG and GT. Residue D108 coordinates Mg(2+). Positions 144, 158, 173, and 230 each coordinate UDP-N-acetyl-alpha-D-glucosamine. N230 is a Mg(2+) binding site. The segment at 233 to 253 is linker; the sequence is LQLAEAEAILQGRLRRAAMAG. The N-acetyltransferase stretch occupies residues 254-448; it reads GATLVAPETV…LRAARGKPKV (195 aa). UDP-N-acetyl-alpha-D-glucosamine contacts are provided by R319 and K337. The active-site Proton acceptor is the H349. The UDP-N-acetyl-alpha-D-glucosamine site is built by Y352 and N363. Acetyl-CoA contacts are provided by residues A366, 372-373, S409, and R426; that span reads NY.

It in the N-terminal section; belongs to the N-acetylglucosamine-1-phosphate uridyltransferase family. In the C-terminal section; belongs to the transferase hexapeptide repeat family. Homotrimer. Requires Mg(2+) as cofactor.

It is found in the cytoplasm. The catalysed reaction is alpha-D-glucosamine 1-phosphate + acetyl-CoA = N-acetyl-alpha-D-glucosamine 1-phosphate + CoA + H(+). The enzyme catalyses N-acetyl-alpha-D-glucosamine 1-phosphate + UTP + H(+) = UDP-N-acetyl-alpha-D-glucosamine + diphosphate. It functions in the pathway nucleotide-sugar biosynthesis; UDP-N-acetyl-alpha-D-glucosamine biosynthesis; N-acetyl-alpha-D-glucosamine 1-phosphate from alpha-D-glucosamine 6-phosphate (route II): step 2/2. It participates in nucleotide-sugar biosynthesis; UDP-N-acetyl-alpha-D-glucosamine biosynthesis; UDP-N-acetyl-alpha-D-glucosamine from N-acetyl-alpha-D-glucosamine 1-phosphate: step 1/1. The protein operates within bacterial outer membrane biogenesis; LPS lipid A biosynthesis. In terms of biological role, catalyzes the last two sequential reactions in the de novo biosynthetic pathway for UDP-N-acetylglucosamine (UDP-GlcNAc). The C-terminal domain catalyzes the transfer of acetyl group from acetyl coenzyme A to glucosamine-1-phosphate (GlcN-1-P) to produce N-acetylglucosamine-1-phosphate (GlcNAc-1-P), which is converted into UDP-GlcNAc by the transfer of uridine 5-monophosphate (from uridine 5-triphosphate), a reaction catalyzed by the N-terminal domain. The polypeptide is Bifunctional protein GlmU (Azorhizobium caulinodans (strain ATCC 43989 / DSM 5975 / JCM 20966 / LMG 6465 / NBRC 14845 / NCIMB 13405 / ORS 571)).